The sequence spans 495 residues: tRNA-guanine(15) transglycosylase (495 aa).

Catalysis depends on aspartate 83, which acts as the Nucleophile. Aspartate 118 lines the substrate pocket. Zn(2+)-binding residues include cysteine 273 and cysteine 278.

Belongs to the archaeosine tRNA-ribosyltransferase family. Requires Zn(2+) as cofactor.

The catalysed reaction is guanosine(15) in tRNA + 7-cyano-7-deazaguanine = 7-cyano-7-carbaguanosine(15) in tRNA + guanine. The protein operates within tRNA modification; archaeosine-tRNA biosynthesis. Exchanges the guanine residue with 7-cyano-7-deazaguanine (preQ0) at position 15 in the dihydrouridine loop (D-loop) of archaeal tRNAs. The sequence is that of tRNA-guanine(15) transglycosylase from Pyrobaculum aerophilum (strain ATCC 51768 / DSM 7523 / JCM 9630 / CIP 104966 / NBRC 100827 / IM2).